Consider the following 53-residue polypeptide: Small ribosomal subunit protein uS14 (53 aa).

Cys-18, Cys-21, Cys-36, and Cys-39 together coordinate Zn(2+).

Belongs to the universal ribosomal protein uS14 family. Zinc-binding uS14 subfamily. As to quaternary structure, part of the 30S ribosomal subunit. The cofactor is Zn(2+).

In terms of biological role, binds 16S rRNA, required for the assembly of 30S particles. The sequence is that of Small ribosomal subunit protein uS14 from Thermoplasma volcanium (strain ATCC 51530 / DSM 4299 / JCM 9571 / NBRC 15438 / GSS1).